A 450-amino-acid chain; its full sequence is MGDTRVTVIGGGLAGSEAAWQLARAGVAVELVEMKPERRSPAHVLPGLAELVCSNSLRSDNPQNAVGLLHEELRRLGSLVLGCADATRVPAGDALAVDRERFSEAVTARLSGHPGVRIVHREVEDLPPPPALAVIATGPLTGDALAARLAEATGGRLHFYDAIAPIVAAESIDRSIAYARSRYGKGSGDDYLNLPLDEAQYHAFVDALLQGEKVPAHGFEEPRYFEGCLPIEVMAERGTEVLAHGPLKPVGLEDPRTGRWPHAVVQLRREDVEGTAWNLVGFQTRLTWPEQRRIFRAFLPGLANAEFVRLGQIHRNTFVDAPRVLAPDLSVRAAPHLFLAGQITGVEGYVESAACGLMAARAVLDRLAERAFRPPPAATALGALHRHLTGEAHPPGYDYQPSNVVFALFPPLTGRHRGKAGRKEAHVERARKELAPWIDTAPPPAVPAAG.

10-15 (GGGLAG) contributes to the FAD binding site.

This sequence belongs to the MnmG family. TrmFO subfamily. It depends on FAD as a cofactor.

It is found in the cytoplasm. It catalyses the reaction uridine(54) in tRNA + (6R)-5,10-methylene-5,6,7,8-tetrahydrofolate + NADH + H(+) = 5-methyluridine(54) in tRNA + (6S)-5,6,7,8-tetrahydrofolate + NAD(+). The enzyme catalyses uridine(54) in tRNA + (6R)-5,10-methylene-5,6,7,8-tetrahydrofolate + NADPH + H(+) = 5-methyluridine(54) in tRNA + (6S)-5,6,7,8-tetrahydrofolate + NADP(+). Its function is as follows. Catalyzes the folate-dependent formation of 5-methyl-uridine at position 54 (M-5-U54) in all tRNAs. The chain is Methylenetetrahydrofolate--tRNA-(uracil-5-)-methyltransferase TrmFO from Anaeromyxobacter dehalogenans (strain 2CP-C).